Reading from the N-terminus, the 80-residue chain is N-V protease (80 aa).

Belongs to the peptidase S8 family. In terms of assembly, monomer. Body cavity.

It localises to the secreted. Its activity is regulated as follows. Inhibited by the serine protease inhibitors DFP, PMSF and TLCK. Not inhibited by the serine protease inhibitors aprotinin, elastinal, SBTI and benzamidine, the cysteine protease inhibitors iodoacetate and E64, or the metalloprotease inhibitors EDTA and EGTA. In terms of biological role, serine protease. Hydrolyzes the alpha chains of fibrin and fibrinogen completely, has lower activity on the beta and gamma chains of fibrin and fibrinogen. The protein is N-V protease of Alitta virens (Sandworm).